We begin with the raw amino-acid sequence, 695 residues long: Serotransferrin (695 aa).

An N-terminal signal peptide occupies residues 1–19; sequence MRLAAGALLACAALGLCLA. 2 consecutive Transferrin-like domains span residues 25-347 and 361-680; these read VRWC…NLRE and VKWC…NLRK. Cystine bridges form between cysteine 28-cysteine 67 and cysteine 38-cysteine 58. At arginine 42 the chain carries Dimethylated arginine. Fe(3+) is bound by residues aspartate 82 and tyrosine 114. Cystine bridges form between cysteine 137–cysteine 213, cysteine 156–cysteine 350, cysteine 177–cysteine 193, cysteine 180–cysteine 196, cysteine 190–cysteine 198, cysteine 246–cysteine 260, cysteine 358–cysteine 612, cysteine 364–cysteine 396, cysteine 374–cysteine 387, cysteine 421–cysteine 690, cysteine 436–cysteine 653, cysteine 468–cysteine 539, cysteine 492–cysteine 681, cysteine 502–cysteine 516, cysteine 513–cysteine 522, cysteine 579–cysteine 593, and cysteine 631–cysteine 636. Hydrogencarbonate is bound by residues threonine 139, arginine 143, alanine 145, and glycine 146. Tyrosine 207 contributes to the Fe(3+) binding site. Histidine 268 serves as a coordination point for Fe(3+). Serine 389 bears the Phosphoserine mark. Aspartate 411 and tyrosine 444 together coordinate Fe(3+). The hydrogencarbonate site is built by threonine 470, arginine 474, alanine 476, and glycine 477. A glycan (N-linked (GlcNAc...) asparagine) is linked at asparagine 509. Fe(3+) is bound at residue tyrosine 533. A Fe(3+)-binding site is contributed by histidine 601. Residue serine 682 is modified to Phosphoserine.

Belongs to the transferrin family. In terms of assembly, monomer. Part of a complex composed of SLC40A1/ferroportin, TF/transferrin and HEPH/hephaestin that transfers iron from cells to transferrin. As to expression, expressed by the liver and secreted in plasma.

The protein localises to the secreted. Functionally, transferrins are iron binding transport proteins which can bind two Fe(3+) ions in association with the binding of an anion, usually bicarbonate. It is responsible for the transport of iron from sites of absorption and heme degradation to those of storage and utilization. Serum transferrin may also have a further role in stimulating cell proliferation. The polypeptide is Serotransferrin (TF) (Oryctolagus cuniculus (Rabbit)).